The primary structure comprises 117 residues: Large ribosomal subunit protein uL24 (117 aa).

The span at 1–12 shows a compositional bias: polar residues; it reads MSKKNSQTSPQR. The segment at 1-20 is disordered; the sequence is MSKKNSQTSPQRQKMHVKKG.

Belongs to the universal ribosomal protein uL24 family. As to quaternary structure, part of the 50S ribosomal subunit.

Its function is as follows. One of two assembly initiator proteins, it binds directly to the 5'-end of the 23S rRNA, where it nucleates assembly of the 50S subunit. In terms of biological role, one of the proteins that surrounds the polypeptide exit tunnel on the outside of the subunit. This is Large ribosomal subunit protein uL24 from Microcystis aeruginosa (strain NIES-843 / IAM M-2473).